The following is a 236-amino-acid chain: Small ribosomal subunit protein uS2c (236 aa).

This sequence belongs to the universal ribosomal protein uS2 family.

It is found in the plastid. Its subcellular location is the chloroplast. The polypeptide is Small ribosomal subunit protein uS2c (rps2) (Amborella trichopoda).